A 464-amino-acid chain; its full sequence is Alpha-amylase (464 aa).

Positions 1 to 21 (MKNTAGILAIAGMLIAPLAHA) are cleaved as a signal peptide. The substrate site is built by His107 and Arg213. Asp215 (nucleophile) is an active-site residue. Substrate is bound at residue 218–219 (KH). The active-site Proton donor is Glu242. The substrate site is built by Gly247 and His313.

This sequence belongs to the glycosyl hydrolase 13 family.

Its subcellular location is the secreted. The enzyme catalyses Endohydrolysis of (1-&gt;4)-alpha-D-glucosidic linkages in polysaccharides containing three or more (1-&gt;4)-alpha-linked D-glucose units.. This chain is Alpha-amylase, found in Aeromonas hydrophila.